The chain runs to 482 residues: MSDAPIIAVVMAGGTGSRLWPLSRELYPKQFLQLSGDNTLLQTTLLRLSGLSCQKPLVITNEQHRFVVAEQLREINKLNGNIILEPCGRNTAPAIAISAFHALKRNPQEDPLLLVLAADHVIAKESVFCDAIKNATPIANQGKIVTFGIIPEYAETGYGYIERGELSVPLQGHENTGFYYVNKFVEKPNRETAELYMTSGNHYWNSGIFMFKASVYLEELRKFRPDIYNVCEQVASSSYIDLDFIRLSKEQFQDCPAESIDFAVMEKTEKCVVCPVDIGWSDVGSWQSLWDISLKSKTGDVCKGDILTYDTKNNYIYSESALVAAIGIEDMVIVQTKDAVLVSKKSDVQHVKKIVEMLKLQQRTEYISHREVFRPWGKFDSIDQGERYKVKKIIVKPGEGLSLRMHHHRSEHWIVLSGTAKVTLGDKTKLVTANESIYIPLGAAYSLENPGIIPLNLIEVSSGDYLGEDDIIRQKERYKHED.

This sequence belongs to the mannose-6-phosphate isomerase type 2 family.

It catalyses the reaction alpha-D-mannose 1-phosphate + GTP + H(+) = GDP-alpha-D-mannose + diphosphate. It participates in nucleotide-sugar biosynthesis; GDP-alpha-D-mannose biosynthesis; GDP-alpha-D-mannose from alpha-D-mannose 1-phosphate (GTP route): step 1/1. In terms of biological role, involved in GDP-mannose biosynthesis which serves as the activated sugar nucleotide precursor for mannose residues in cell surface polysaccharides. This enzyme participates in synthesis of the LPS O antigen. This is Mannose-1-phosphate guanylyltransferase 2 (manC2) from Escherichia coli O157:H7.